Consider the following 496-residue polypeptide: Glutamyl-tRNA(Gln) amidotransferase subunit A (496 aa).

Active-site charge relay system residues include lysine 75 and serine 150. Serine 174 serves as the catalytic Acyl-ester intermediate.

Belongs to the amidase family. GatA subfamily. Heterotrimer of A, B and C subunits.

It carries out the reaction L-glutamyl-tRNA(Gln) + L-glutamine + ATP + H2O = L-glutaminyl-tRNA(Gln) + L-glutamate + ADP + phosphate + H(+). Allows the formation of correctly charged Gln-tRNA(Gln) through the transamidation of misacylated Glu-tRNA(Gln) in organisms which lack glutaminyl-tRNA synthetase. The reaction takes place in the presence of glutamine and ATP through an activated gamma-phospho-Glu-tRNA(Gln). The chain is Glutamyl-tRNA(Gln) amidotransferase subunit A from Burkholderia ambifaria (strain MC40-6).